Here is a 201-residue protein sequence, read N- to C-terminus: Small ribosomal subunit protein uS4c (201 aa).

The disordered stretch occupies residues 23 to 42 (SKKPRAGSNLRNQLRPGKKS). Residues 89-151 (MRLDNILFRL…QKSKSLVQNY (63 aa)) form the S4 RNA-binding domain.

The protein belongs to the universal ribosomal protein uS4 family. Part of the 30S ribosomal subunit. Contacts protein S5. The interaction surface between S4 and S5 is involved in control of translational fidelity.

The protein localises to the plastid. It is found in the chloroplast. In terms of biological role, one of the primary rRNA binding proteins, it binds directly to 16S rRNA where it nucleates assembly of the body of the 30S subunit. Functionally, with S5 and S12 plays an important role in translational accuracy. This Morus indica (Mulberry) protein is Small ribosomal subunit protein uS4c (rps4).